A 221-amino-acid polypeptide reads, in one-letter code: uncharacterized protein (221 aa).

Over residues 1–16 (MESSRWDKDPPGERRP) the composition is skewed to basic and acidic residues. A disordered region spans residues 1–64 (MESSRWDKDP…SHTPQTNTRR (64 aa)).

This is an uncharacterized protein from Homo sapiens (Human).